A 337-amino-acid polypeptide reads, in one-letter code: Methylthioribose-1-phosphate isomerase (337 aa).

Residues 47 to 49 (RGA), R81, and Q184 each bind substrate. Catalysis depends on D225, which acts as the Proton donor. Position 235 to 236 (235 to 236 (NK)) interacts with substrate.

Belongs to the eIF-2B alpha/beta/delta subunits family. MtnA subfamily.

The catalysed reaction is 5-(methylsulfanyl)-alpha-D-ribose 1-phosphate = 5-(methylsulfanyl)-D-ribulose 1-phosphate. Its pathway is amino-acid biosynthesis; L-methionine biosynthesis via salvage pathway; L-methionine from S-methyl-5-thio-alpha-D-ribose 1-phosphate: step 1/6. Its function is as follows. Catalyzes the interconversion of methylthioribose-1-phosphate (MTR-1-P) into methylthioribulose-1-phosphate (MTRu-1-P). The polypeptide is Methylthioribose-1-phosphate isomerase (Parasynechococcus marenigrum (strain WH8102)).